Here is a 362-residue protein sequence, read N- to C-terminus: MERITVTLGERSYPITIAAGLFNDPASFLPLKAGDQAMLVTNETLAPLYLDKIRHLLEQAGVNVDSVILPDGEQYKSLAVLETVFTALLQKPHGRDTTLLALGGGVVGDLTGFAAASYQRGVRFIQIPTTLLSQVDSSVGGKTAVNHPLGKNMIGAFYQPASVVVDLDCLNTLPQRELASGLAEVIKYGIILDGEFFSWLEDNMDALLNLDGKALAYCIRRCCELKAEVVAADERETGLRALLNLGHTFGHAIEAEMGYGNWLHGEAVAAGMVMAARTSERLGQFKQEETQRIITLLERAGLPVTGPREMSSHAYLPHMMRDKKVLAGEMRLVLPLAIGKSEVRGGVPHDVVLGAIADCQQA.

Residues 71 to 76, 105 to 109, 129 to 130, K142, K151, and 169 to 172 contribute to the NAD(+) site; these read DGEQYK, GVVGD, TT, and CLNT. Positions 184, 247, and 264 each coordinate Zn(2+).

It belongs to the sugar phosphate cyclases superfamily. Dehydroquinate synthase family. The cofactor is Co(2+). It depends on Zn(2+) as a cofactor. NAD(+) serves as cofactor.

It localises to the cytoplasm. The catalysed reaction is 7-phospho-2-dehydro-3-deoxy-D-arabino-heptonate = 3-dehydroquinate + phosphate. Its pathway is metabolic intermediate biosynthesis; chorismate biosynthesis; chorismate from D-erythrose 4-phosphate and phosphoenolpyruvate: step 2/7. Functionally, catalyzes the conversion of 3-deoxy-D-arabino-heptulosonate 7-phosphate (DAHP) to dehydroquinate (DHQ). This Enterobacter sp. (strain 638) protein is 3-dehydroquinate synthase.